A 212-amino-acid polypeptide reads, in one-letter code: HTH-type transcriptional repressor KstR (212 aa).

Low complexity predominate over residues Met1–Thr11. The interval Met1–Lys28 is disordered. Residues Lys28 to Ile88 enclose the HTH tetR-type domain. Positions Gln51–Phe70 form a DNA-binding region, H-T-H motif.

As to quaternary structure, homodimer.

Functionally, controls the expression of genes used for utilizing diverse lipids as energy sources. The chain is HTH-type transcriptional repressor KstR (kstR) from Rhodococcus jostii (strain RHA1).